The primary structure comprises 380 residues: Chaperone protein DnaJ (380 aa).

The region spanning 5 to 72 (DYYETLGVAK…QKRAAYDQYG (68 aa)) is the J domain. The CR-type zinc finger occupies 140–218 (GKDTQIRIPS…CNGAGRIKSN (79 aa)). Residues cysteine 153, cysteine 156, cysteine 170, cysteine 173, cysteine 192, cysteine 195, cysteine 206, and cysteine 209 each coordinate Zn(2+). 4 CXXCXGXG motif repeats span residues 153–160 (CSTCDGTG), 170–177 (CPTCSGSG), 192–199 (CPSCHGTG), and 206–213 (CTACNGAG). Positions 357 to 380 (LKKGGERHSPNAKSWTDRVKDLFK) are disordered.

It belongs to the DnaJ family. As to quaternary structure, homodimer. Zn(2+) is required as a cofactor.

It localises to the cytoplasm. Functionally, participates actively in the response to hyperosmotic and heat shock by preventing the aggregation of stress-denatured proteins and by disaggregating proteins, also in an autonomous, DnaK-independent fashion. Unfolded proteins bind initially to DnaJ; upon interaction with the DnaJ-bound protein, DnaK hydrolyzes its bound ATP, resulting in the formation of a stable complex. GrpE releases ADP from DnaK; ATP binding to DnaK triggers the release of the substrate protein, thus completing the reaction cycle. Several rounds of ATP-dependent interactions between DnaJ, DnaK and GrpE are required for fully efficient folding. Also involved, together with DnaK and GrpE, in the DNA replication of plasmids through activation of initiation proteins. The chain is Chaperone protein DnaJ from Methylibium petroleiphilum (strain ATCC BAA-1232 / LMG 22953 / PM1).